The following is a 341-amino-acid chain: MLSNPSELVTRNIEQLENQRVMLINIEADELGHHLTRHCSEVAALALDFNHFQAQPSGKSGFRCEFGHQWSRDEKFDVVVVYFPKAKALAPYLFALAAWHLRPDGTLLITGENKGGIRSVDKLLGNAFSPACKIDNARHCLLYSATLVAEATKPNAEDWVSRYRLSLPSGDIQICNMVGVFSDKQLDQGTALLLDNLPKLEGRVLDFGCGAGVIAIALMQQNPGLQLECVDINAMALLSCELSLKANGMEAKVYASDGLAQTDGLFNAIVSNPPFHDGLSSTTDIATRFVADSYKQLHKGGNWQIVANRHLPYSDTIAKVFGEVNTVAENNKYKVYANKKR.

It belongs to the methyltransferase superfamily. RsmC family. Monomer.

The protein resides in the cytoplasm. It carries out the reaction guanosine(1207) in 16S rRNA + S-adenosyl-L-methionine = N(2)-methylguanosine(1207) in 16S rRNA + S-adenosyl-L-homocysteine + H(+). Its function is as follows. Specifically methylates the guanine in position 1207 of 16S rRNA in the 30S particle. This is Ribosomal RNA small subunit methyltransferase C from Shewanella amazonensis (strain ATCC BAA-1098 / SB2B).